A 153-amino-acid polypeptide reads, in one-letter code: Large ribosomal subunit protein uL30 (153 aa).

It belongs to the universal ribosomal protein uL30 family. As to quaternary structure, part of the 50S ribosomal subunit.

This Methanoculleus marisnigri (strain ATCC 35101 / DSM 1498 / JR1) protein is Large ribosomal subunit protein uL30.